The chain runs to 270 residues: BPI fold-containing family A member 1 (270 aa).

Residues Met1–Ala19 form the signal peptide. The segment at Leu104–Leu109 is important for surfactant activity and antibacterial properties. N-linked (GlcNAc...) asparagine glycosylation is present at Asn174. Cys196 and Cys238 form a disulfide bridge.

It belongs to the BPI/LBP/Plunc superfamily. Plunc family. As to quaternary structure, monomer. Interacts (via N-terminus) with SCNN1B, a subunit of the heterotrimeric epithelial sodium channel (ENaC); this inhibits proteolytic activation of ENaC. As to expression, detected in adult nasal epithelium, heart, lung, spleen, testis and salivary gland, and in embryonic nasal epithelium, lung, salivary gland and thymus.

It localises to the secreted. Lipid-binding protein which shows high specificity for the surfactant phospholipid dipalmitoylphosphatidylcholine (DPPC). Plays a role in the innate immune responses of the upper airways. Reduces the surface tension in secretions from airway epithelia and inhibits the formation of biofilm by pathogenic Gram-negative bacteria, such as P.aeruginosa and K.pneumoniae. Negatively regulates proteolytic cleavage of SCNN1G, an event that is required for activation of the epithelial sodium channel (ENaC), and thereby contributes to airway surface liquid homeostasis and proper clearance of mucus. Plays a role in the airway inflammatory response after exposure to irritants. May attract macrophages and neutrophils. The chain is BPI fold-containing family A member 1 (Bpifa1) from Rattus norvegicus (Rat).